Reading from the N-terminus, the 646-residue chain is Cysteine-rich receptor-like protein kinase 37 (646 aa).

The first 26 residues, 1-26 (MGKSCVVTSSFSLLLLFLQTLKYVHA), serve as a signal peptide directing secretion. Gnk2-homologous domains lie at 27-132 (GFIC…NHST) and 142-252 (TINP…LYPY). Topologically, residues 27–287 (GFICYGDFFN…RDEKSFQGSN (261 aa)) are extracellular. N-linked (GlcNAc...) asparagine glycosylation is found at Asn62, Asn129, Asn169, and Asn180. Residues 288 to 308 (IAIIVVPSVINLIIFVVLIFS) traverse the membrane as a helical segment. Residues 309-646 (WKRKQSHTII…LTRPSLSLGH (338 aa)) are Cytoplasmic-facing. In terms of domain architecture, Protein kinase spans 345–626 (FSLENKLGQG…LFWLERHATI (282 aa)). Residues 351–359 (LGQGGFGSV) and Lys373 each bind ATP. A Phosphotyrosine modification is found at Tyr418. Catalysis depends on Asp470, which acts as the Proton acceptor. The residue at position 474 (Ser474) is a Phosphoserine. Thr510 is modified (phosphothreonine). Phosphotyrosine is present on Tyr518.

This sequence belongs to the protein kinase superfamily. Ser/Thr protein kinase family. CRK subfamily.

The protein resides in the membrane. It carries out the reaction L-seryl-[protein] + ATP = O-phospho-L-seryl-[protein] + ADP + H(+). It catalyses the reaction L-threonyl-[protein] + ATP = O-phospho-L-threonyl-[protein] + ADP + H(+). The chain is Cysteine-rich receptor-like protein kinase 37 (CRK37) from Arabidopsis thaliana (Mouse-ear cress).